The following is a 242-amino-acid chain: MSKQPENSFSSDKFFPIKQKLALEAVALVEPGMCVGLGSGSTAREFILALGDRVRTERLVITAVASSRISQLLAEAVGIPLSDHSLLQDVDLVVDGADEVDPCLRMIKGGGGALFREKILLQSGKRNVILVDERKLVPTLGKFSLPIEIAPFGCSSVQRILNKQGYFGEWRETSAGERFITDNGNYIYDVRTPDSYANPEEDMIRLLQIRGIIDVGFVIAKAEVWVGYADGSIVRKKEHNEY.

Residues Ser39 to Thr42, Asp95 to Asp98, and Lys108 to Gly111 contribute to the substrate site. Glu117 (proton acceptor) is an active-site residue. Lys135 contacts substrate.

It belongs to the ribose 5-phosphate isomerase family. In terms of assembly, homodimer.

The enzyme catalyses aldehydo-D-ribose 5-phosphate = D-ribulose 5-phosphate. It participates in carbohydrate degradation; pentose phosphate pathway; D-ribose 5-phosphate from D-ribulose 5-phosphate (non-oxidative stage): step 1/1. Functionally, catalyzes the reversible conversion of ribose-5-phosphate to ribulose 5-phosphate. The chain is Ribose-5-phosphate isomerase A from Chlamydia trachomatis serovar D (strain ATCC VR-885 / DSM 19411 / UW-3/Cx).